The chain runs to 227 residues: Ribosomal RNA large subunit methyltransferase E (227 aa).

Residues Gly78, Trp80, Asp103, Asp119, and Asp143 each contribute to the S-adenosyl-L-methionine site. The active-site Proton acceptor is the Lys183.

The protein belongs to the class I-like SAM-binding methyltransferase superfamily. RNA methyltransferase RlmE family.

The protein localises to the cytoplasm. It catalyses the reaction uridine(2552) in 23S rRNA + S-adenosyl-L-methionine = 2'-O-methyluridine(2552) in 23S rRNA + S-adenosyl-L-homocysteine + H(+). Its function is as follows. Specifically methylates the uridine in position 2552 of 23S rRNA at the 2'-O position of the ribose in the fully assembled 50S ribosomal subunit. The polypeptide is Ribosomal RNA large subunit methyltransferase E (Rickettsia peacockii (strain Rustic)).